The primary structure comprises 256 residues: Lysine-rich coiled-coil protein 1 (256 aa).

Disordered regions lie at residues 62 to 84 and 144 to 256; these read RLPSGTNHSYPRSCSSSQTEDRV and TIDP…ILGF. Residues 64–79 are compositionally biased toward polar residues; that stretch reads PSGTNHSYPRSCSSSQ. Composition is skewed to basic and acidic residues over residues 161 to 188 and 218 to 227; these read HVEEGREKQEERPKHERKRSSEEMDLNK and KTRDVSSKKE. Residues 209–247 adopt a coiled-coil conformation; it reads EKLKNRKEKKTRDVSSKKEDRKRRKEKKEQGEERTEEEM.

In Mus musculus (Mouse), this protein is Lysine-rich coiled-coil protein 1 (Krcc1).